The sequence spans 86 residues: YcgL domain-containing protein Smlt4554 (86 aa).

Positions 1 to 85 constitute a YcgL domain; that stretch reads MHAYVYKSQL…SVASLMPRHY (85 aa).

This is YcgL domain-containing protein Smlt4554 from Stenotrophomonas maltophilia (strain K279a).